The primary structure comprises 257 residues: Short chain dehydrogenase helC (257 aa).

Residues 1 to 22 (MNTAIITGAAQGVGLCIAEALA) form the signal peptide. Val13 is a binding site for NADP(+). Residue Asn46 is glycosylated (N-linked (GlcNAc...) asparagine). NADP(+) is bound by residues Asp60 and Asn87. A glycan (N-linked (GlcNAc...) asparagine) is linked at Asn110. The NADP(+) site is built by Tyr154, Lys158, Ile185, and Thr187. Catalysis depends on Tyr154, which acts as the Proton acceptor. The active-site Lowers pKa of active site Tyr is Lys158.

Belongs to the short-chain dehydrogenases/reductases (SDR) family.

The protein operates within mycotoxin biosynthesis. Functionally, short chain dehydrogenase; part of the gene cluster that mediates the biosynthesis of helvolic acid, an antibacterial nortriterpenoid. Protostadienol synthase helA cyclizes (3S)-oxidosqualene to (17Z)-protosta-17(20),24-dien-3-beta-ol (protostadienol). The synthesis of protostadienol is followed by several steps of monooxygenation, dehydrogenation, and acyl transfer to yield the final helvolic acid. Following the cyclization to the tetracyclic protostadienol by helA, cytochrome P450 monooxygenases helB1-mediated and helB2-mediated oxidation at C-4 and C-16, acyltransferase helD2-dependent acetylation of 16-OH, oxidation of C-21 by cytochrome P450 monooxygenase helB4, and short chain dehydrogenase helC-dependent oxidative decarboxylation yield the fusidane skeleton. This intermediate is further modified in three additional steps mediated by the cytochrome P450 monooxygenase helB3, the acyltransferase helD1, and the 3-ketosteroid 1-dehydrogenase helE to give helvolic acid. Compared with the late stages in the biosynthesis of helvolic acid, enzymes involved in the early stage modifications act in a relatively strict order. The hydroxylation of C-16 by helB1 and subsequent acetylation by helD2 should occur before the helB3-mediated oxidation of C-21. C-4 demethylation in fusidane-type antibiotics proceeds in an unusual manner though it is also achieved by oxidative decarboxylation. The methyl group at C-4 beta position is oxidized by helB1 and subsequently removed by the short chain dehydrogenase helC. The polypeptide is Short chain dehydrogenase helC (Aspergillus fumigatus (strain ATCC MYA-4609 / CBS 101355 / FGSC A1100 / Af293) (Neosartorya fumigata)).